A 28-amino-acid chain; its full sequence is Phospholipase A2 pseudexin C chain (28 aa).

Ca(2+) is bound at residue Tyr28.

This sequence belongs to the phospholipase A2 family. Group I subfamily. The cofactor is Ca(2+). Expressed by the venom gland.

The protein localises to the secreted. The catalysed reaction is a 1,2-diacyl-sn-glycero-3-phosphocholine + H2O = a 1-acyl-sn-glycero-3-phosphocholine + a fatty acid + H(+). Functionally, PLA2 catalyzes the calcium-dependent hydrolysis of the 2-acyl groups in 3-sn-phosphoglycerides. The polypeptide is Phospholipase A2 pseudexin C chain (Pseudechis porphyriacus (Red-bellied black snake)).